Here is a 236-residue protein sequence, read N- to C-terminus: MQQNTNVDPQEIAKFERMAETWWDLNGEFKPLHLLNPLRLNYIDQTAGGIFGKKVLDVGCGGGILSESMARIGAIVHGLDMGEEPLEVARLHALETGVSINYVKNTAEAHREDHREYYDVVTCMEMLEHVPDPLSVIQACCDMVKPGGFVFFSTINRNIKSFVETIIGAEYLLKMLPIGTHDHNKFIKPSELMALVDNTDLLCKDALGITYNPLTGIFKYTPKVDVNYMIATQKVD.

S-adenosyl-L-methionine is bound by residues Arg-39, Gly-59, Asp-80, and Met-124.

The protein belongs to the methyltransferase superfamily. UbiG/COQ3 family.

The enzyme catalyses a 3-demethylubiquinol + S-adenosyl-L-methionine = a ubiquinol + S-adenosyl-L-homocysteine + H(+). It catalyses the reaction a 3-(all-trans-polyprenyl)benzene-1,2-diol + S-adenosyl-L-methionine = a 2-methoxy-6-(all-trans-polyprenyl)phenol + S-adenosyl-L-homocysteine + H(+). Its pathway is cofactor biosynthesis; ubiquinone biosynthesis. O-methyltransferase that catalyzes the 2 O-methylation steps in the ubiquinone biosynthetic pathway. This Shewanella sp. (strain MR-7) protein is Ubiquinone biosynthesis O-methyltransferase.